Consider the following 800-residue polypeptide: Ion-translocating oxidoreductase complex subunit C (800 aa).

4Fe-4S ferredoxin-type domains lie at 367-398 (DEFSVPQAEQPCIRCGACADVCPARLLPQQLY) and 408-437 (KARGYHLQECIECGACAYVCPSNIPLVQYY). Residues C378, C381, C384, C388, C417, C420, C423, and C427 each coordinate [4Fe-4S] cluster. Low complexity-rich tracts occupy residues 536-553 (GATPAPAATDSDAAAPAP), 571-583 (AKQAGATPAPAAT), 599-617 (AAIARAKAKQAGATPAPAA), 647-667 (AKQAGATPAPATTDSDAADPA), and 675-690 (AAIAAAIARAKAKQAA). Disordered stretches follow at residues 536–558 (GATPAPAATDSDAAAPAPQDDPR), 571–631 (AKQA…QDDP), and 647–706 (AKQA…ENTD). Over residues 693 to 705 (HATTEPVTVQENT) the composition is skewed to polar residues.

It belongs to the 4Fe4S bacterial-type ferredoxin family. RnfC subfamily. The complex is composed of six subunits: RnfA, RnfB, RnfC, RnfD, RnfE and RnfG. [4Fe-4S] cluster serves as cofactor.

The protein localises to the cell inner membrane. Functionally, part of a membrane-bound complex that couples electron transfer with translocation of ions across the membrane. This chain is Ion-translocating oxidoreductase complex subunit C, found in Edwardsiella ictaluri (strain 93-146).